A 312-amino-acid polypeptide reads, in one-letter code: Acetylglutamate kinase (312 aa).

Substrate is bound by residues 74-75, R96, and N195; that span reads GG.

This sequence belongs to the acetylglutamate kinase family. ArgB subfamily.

It is found in the cytoplasm. The catalysed reaction is N-acetyl-L-glutamate + ATP = N-acetyl-L-glutamyl 5-phosphate + ADP. It functions in the pathway amino-acid biosynthesis; L-arginine biosynthesis; N(2)-acetyl-L-ornithine from L-glutamate: step 2/4. Catalyzes the ATP-dependent phosphorylation of N-acetyl-L-glutamate. The polypeptide is Acetylglutamate kinase (Nocardioides sp. (strain ATCC BAA-499 / JS614)).